A 101-amino-acid chain; its full sequence is NAD(P)H-quinone oxidoreductase subunit 4L, chloroplastic (101 aa).

Helical transmembrane passes span 2–22 (IFQSYLLIAASMFCIGLYGLL), 32–52 (MSLELLLNAVNLNLLTFSNFV), and 61–81 (VLALFVIALAAAEAAIGLAII).

It belongs to the complex I subunit 4L family. In terms of assembly, NDH is composed of at least 16 different subunits, 5 of which are encoded in the nucleus.

It is found in the plastid. The protein resides in the chloroplast thylakoid membrane. The catalysed reaction is a plastoquinone + NADH + (n+1) H(+)(in) = a plastoquinol + NAD(+) + n H(+)(out). It catalyses the reaction a plastoquinone + NADPH + (n+1) H(+)(in) = a plastoquinol + NADP(+) + n H(+)(out). Functionally, NDH shuttles electrons from NAD(P)H:plastoquinone, via FMN and iron-sulfur (Fe-S) centers, to quinones in the photosynthetic chain and possibly in a chloroplast respiratory chain. The immediate electron acceptor for the enzyme in this species is believed to be plastoquinone. Couples the redox reaction to proton translocation, and thus conserves the redox energy in a proton gradient. The chain is NAD(P)H-quinone oxidoreductase subunit 4L, chloroplastic from Nephroselmis olivacea (Green alga).